Here is a 142-residue protein sequence, read N- to C-terminus: Large ribosomal subunit protein uL13 (142 aa).

It belongs to the universal ribosomal protein uL13 family. In terms of assembly, part of the 50S ribosomal subunit.

In terms of biological role, this protein is one of the early assembly proteins of the 50S ribosomal subunit, although it is not seen to bind rRNA by itself. It is important during the early stages of 50S assembly. In Pelobacter propionicus (strain DSM 2379 / NBRC 103807 / OttBd1), this protein is Large ribosomal subunit protein uL13.